Reading from the N-terminus, the 30-residue chain is 80 kDa carcinoembryonic antigen-binding protein (30 aa).

As to quaternary structure, binds to carcinoembryonic antigen (CEA). Post-translationally, the N-terminus is blocked.

The protein resides in the cell membrane. May play a role in the development of hepatic metastases from colorectal cancers. In Rattus norvegicus (Rat), this protein is 80 kDa carcinoembryonic antigen-binding protein.